Reading from the N-terminus, the 125-residue chain is SKP1-like protein 7 (125 aa).

The interval M94–E125 is interaction with the F-box domain of F-box proteins.

The protein belongs to the SKP1 family. In terms of assembly, part of a SCF (SKP1-cullin-F-box) protein ligase complex. Restricted to siliques.

It is found in the nucleus. It functions in the pathway protein modification; protein ubiquitination. Involved in ubiquitination and subsequent proteasomal degradation of target proteins. Together with CUL1, RBX1 and a F-box protein, it forms a SCF E3 ubiquitin ligase complex. The functional specificity of this complex depends on the type of F-box protein. In the SCF complex, it serves as an adapter that links the F-box protein to CUL1. The sequence is that of SKP1-like protein 7 (ASK7) from Arabidopsis thaliana (Mouse-ear cress).